A 280-amino-acid polypeptide reads, in one-letter code: ATP synthase gamma chain (280 aa).

It belongs to the ATPase gamma chain family. In terms of assembly, F-type ATPases have 2 components, CF(1) - the catalytic core - and CF(0) - the membrane proton channel. CF(1) has five subunits: alpha(3), beta(3), gamma(1), delta(1), epsilon(1). CF(0) has three main subunits: a, b and c.

Its subcellular location is the cell membrane. Its function is as follows. Produces ATP from ADP in the presence of a proton gradient across the membrane. The gamma chain is believed to be important in regulating ATPase activity and the flow of protons through the CF(0) complex. This Mycoplasma capricolum subsp. capricolum (strain California kid / ATCC 27343 / NCTC 10154) protein is ATP synthase gamma chain.